We begin with the raw amino-acid sequence, 727 residues long: Polyribonucleotide nucleotidyltransferase (727 aa).

Residues Asp-488 and Asp-494 each contribute to the Mg(2+) site. Positions 555–614 (PKLYTMKINPEKIRDVIGKGGATIRALTDETGCQINIEEDGTITIAATEAAKADEAKRRI) constitute a KH domain. One can recognise an S1 motif domain in the interval 624 to 692 (GKVYEGPVTK…DKGRVKLSMK (69 aa)). Residues 691–727 (MKALADRPAGDSGRPAPAERGERRERRDGGASEQQQQ) are disordered. Residues 707 to 720 (PAERGERRERRDGG) show a composition bias toward basic and acidic residues.

Belongs to the polyribonucleotide nucleotidyltransferase family. Requires Mg(2+) as cofactor.

The protein resides in the cytoplasm. The enzyme catalyses RNA(n+1) + phosphate = RNA(n) + a ribonucleoside 5'-diphosphate. In terms of biological role, involved in mRNA degradation. Catalyzes the phosphorolysis of single-stranded polyribonucleotides processively in the 3'- to 5'-direction. In Acidovorax ebreus (strain TPSY) (Diaphorobacter sp. (strain TPSY)), this protein is Polyribonucleotide nucleotidyltransferase.